The following is a 426-amino-acid chain: Histidine--tRNA ligase (426 aa).

Belongs to the class-II aminoacyl-tRNA synthetase family. In terms of assembly, homodimer.

The protein resides in the cytoplasm. It carries out the reaction tRNA(His) + L-histidine + ATP = L-histidyl-tRNA(His) + AMP + diphosphate + H(+). This chain is Histidine--tRNA ligase, found in Streptococcus pyogenes serotype M18 (strain MGAS8232).